The primary structure comprises 418 residues: Argininosuccinate synthase (418 aa).

16–24 (AYSGGLDTS) is a binding site for ATP. Tyr95 is an L-citrulline binding site. Residue Gly125 coordinates ATP. L-aspartate contacts are provided by Thr127, Asn131, and Asp132. Asn131 contributes to the L-citrulline binding site. Residues Arg135, Ser183, Glu267, and Tyr279 each contribute to the L-citrulline site.

This sequence belongs to the argininosuccinate synthase family. Type 1 subfamily. In terms of assembly, homotetramer.

The protein resides in the cytoplasm. It catalyses the reaction L-citrulline + L-aspartate + ATP = 2-(N(omega)-L-arginino)succinate + AMP + diphosphate + H(+). Its pathway is amino-acid biosynthesis; L-arginine biosynthesis; L-arginine from L-ornithine and carbamoyl phosphate: step 2/3. In Bifidobacterium adolescentis (strain ATCC 15703 / DSM 20083 / NCTC 11814 / E194a), this protein is Argininosuccinate synthase.